Reading from the N-terminus, the 55-residue chain is A-type ATP synthase subunit G (55 aa).

Has multiple subunits, A(3), B(3), C, D, E, F, G, I and K(x); there may be a few other subunits as well.

The protein resides in the cell membrane. In terms of biological role, component of the A-type ATP synthase that produces ATP from ADP in the presence of a proton gradient across the membrane. The chain is A-type ATP synthase subunit G (atpG) from Methanosarcina mazei (strain ATCC BAA-159 / DSM 3647 / Goe1 / Go1 / JCM 11833 / OCM 88) (Methanosarcina frisia).